Consider the following 507-residue polypeptide: MTDKKYIVALDQGTTSSRAVILDHDANIVSVSQREFKQIYPQAGWVEHDPMELYATQSAVLTEILAKESIRSDQIAAIGITNQRETTIVWNRETGIPVYNAIVWQCRRTASICDALKEQPGLEDYIRENTGLVLDPYFSGTKIKWILDNVEGAREDAEAGKLMFGTVDTWLVWKMTQRHVHVTDYTNASRTMLFNINTLKWDEKLLKILGIPLSMMAEVKSSSEVYGQTNIGGVGGTRIPIAGIAGDQQAALYGHMCVEKGQAKNTYGTGCFLLMNTGKEKVTSSNGLLTTLACGPKGEASYALEGAVFMGGASIQWLRDEMKLLADAKDSEYFATKVDSSNGVYVVPAFTGLGAPYWDPYARGTIVGLTRGVNSNHIIRATLESIAYQTRDVLDAMQADSGIKLSALRVDGGAVANNFLMQFQSDVLDTTVQRPAVSEVTALGAAYLAGLAVGYWESLEELAGKAVIEQTFEPHADPVKRKQRYRGWKRAVKCTQAWAEMHDEDFE.

T14 provides a ligand contact to ADP. The ATP site is built by T14, T15, and S16. T14 lines the sn-glycerol 3-phosphate pocket. R18 is an ADP binding site. Positions 84, 85, 137, and 247 each coordinate sn-glycerol 3-phosphate. The glycerol site is built by R84, E85, Y137, D247, and Q248. 2 residues coordinate ADP: T269 and G312. ATP is bound by residues T269, G312, Q316, and G413. The ADP site is built by G413 and N417.

This sequence belongs to the FGGY kinase family.

The catalysed reaction is glycerol + ATP = sn-glycerol 3-phosphate + ADP + H(+). It functions in the pathway polyol metabolism; glycerol degradation via glycerol kinase pathway; sn-glycerol 3-phosphate from glycerol: step 1/1. Its activity is regulated as follows. Inhibited by fructose 1,6-bisphosphate (FBP). In terms of biological role, key enzyme in the regulation of glycerol uptake and metabolism. Catalyzes the phosphorylation of glycerol to yield sn-glycerol 3-phosphate. This is Glycerol kinase from Psychromonas ingrahamii (strain DSM 17664 / CCUG 51855 / 37).